A 357-amino-acid polypeptide reads, in one-letter code: Homoserine kinase (357 aa).

It belongs to the GHMP kinase family. Homoserine kinase subfamily. As to quaternary structure, homodimer.

The catalysed reaction is L-homoserine + ATP = O-phospho-L-homoserine + ADP + H(+). The protein operates within amino-acid biosynthesis; L-threonine biosynthesis; L-threonine from L-aspartate: step 4/5. Functionally, commits homoserine to the threonine biosynthesis pathway by catalyzing its O-phosphorylation. This is Homoserine kinase (THR1) from Candida albicans (strain SC5314 / ATCC MYA-2876) (Yeast).